The primary structure comprises 696 residues: Protein OS-9 homolog (696 aa).

An N-terminal signal peptide occupies residues Met-1 to Ala-15. Asn-35, Asn-46, and Asn-68 each carry an N-linked (GlcNAc...) asparagine glycan. Positions Asn-106–Leu-224 constitute an MRH domain. Cys-108 and Cys-121 form a disulfide bridge. 6 residues coordinate a mannooligosaccharide derivative: Trp-116, Gln-128, Asp-178, Arg-184, Glu-206, and Tyr-212. 2 cysteine pairs are disulfide-bonded: Cys-177–Cys-210 and Cys-192–Cys-222. N-linked (GlcNAc...) asparagine glycosylation is found at Asn-276, Asn-290, and Asn-372. 2 disordered regions span residues Ile-450–Asp-600 and Thr-667–Leu-696. Residues Thr-458 to Ser-467 show a composition bias toward polar residues. Over residues Arg-482–Glu-498 the composition is skewed to basic and acidic residues. 3 stretches are compositionally biased toward polar residues: residues Glu-499–Ser-518, Asn-528–Asp-553, and Asn-585–Asp-597. Asn-588 carries an N-linked (GlcNAc...) asparagine glycan. The span at Glu-685–Leu-696 shows a compositional bias: basic and acidic residues.

It belongs to the OS-9 family. Interacts with missfolded ER lumenal proteins.

Its subcellular location is the endoplasmic reticulum membrane. Lectin involved in the quality control of the secretory pathway. As a member of the endoplasmic reticulum-associated degradation lumenal (ERAD-L) surveillance system, targets misfolded endoplasmic reticulum lumenal glycoproteins for degradation. The protein is Protein OS-9 homolog (YOS9) of Candida glabrata (strain ATCC 2001 / BCRC 20586 / JCM 3761 / NBRC 0622 / NRRL Y-65 / CBS 138) (Yeast).